The following is a 330-amino-acid chain: ADP-L-glycero-D-manno-heptose-6-epimerase (330 aa).

NADP(+)-binding positions include 11-12 (FI), 32-33 (DN), lysine 39, lysine 54, 75-79 (EGACS), and asparagine 92. Catalysis depends on tyrosine 139, which acts as the Proton acceptor. Residue lysine 143 participates in NADP(+) binding. Asparagine 168 serves as a coordination point for substrate. Positions 169 and 177 each coordinate NADP(+). Lysine 177 serves as the catalytic Proton acceptor. Substrate is bound by residues arginine 179, histidine 186, 200-203 (FGEY), arginine 213, and tyrosine 292.

Belongs to the NAD(P)-dependent epimerase/dehydratase family. HldD subfamily. As to quaternary structure, homopentamer. NADP(+) serves as cofactor.

It catalyses the reaction ADP-D-glycero-beta-D-manno-heptose = ADP-L-glycero-beta-D-manno-heptose. Its pathway is nucleotide-sugar biosynthesis; ADP-L-glycero-beta-D-manno-heptose biosynthesis; ADP-L-glycero-beta-D-manno-heptose from D-glycero-beta-D-manno-heptose 7-phosphate: step 4/4. In terms of biological role, catalyzes the interconversion between ADP-D-glycero-beta-D-manno-heptose and ADP-L-glycero-beta-D-manno-heptose via an epimerization at carbon 6 of the heptose. This Paraburkholderia phytofirmans (strain DSM 17436 / LMG 22146 / PsJN) (Burkholderia phytofirmans) protein is ADP-L-glycero-D-manno-heptose-6-epimerase.